A 72-amino-acid chain; its full sequence is Protein kish-A (72 aa).

Positions 1-26 (MSAIFNFQSLLTVILLLICTCAYIRS) are cleaved as a signal peptide. Residues 27–53 (LAPSLLDRNKTGLLGIFWKCARIGERK) lie on the Extracellular side of the membrane. An N-linked (GlcNAc...) asparagine glycan is attached at Asn35. The helical transmembrane segment at 54–71 (SPYVAVCCIVMAFSILFI) threads the bilayer. Position 72 (Gln72) is a topological domain, cytoplasmic.

The protein belongs to the KISH family.

Its subcellular location is the golgi apparatus membrane. Its function is as follows. Involved in the early part of the secretory pathway. The chain is Protein kish-A (TMEM167A) from Bos taurus (Bovine).